The chain runs to 289 residues: Acetyl-coenzyme A carboxylase carboxyl transferase subunit beta (289 aa).

A CoA carboxyltransferase N-terminal domain is found at 23 to 289; sequence HWIKCPSCSA…YDENPCLLHL (267 aa). Cysteine 27, cysteine 30, cysteine 46, and cysteine 49 together coordinate Zn(2+). A C4-type zinc finger spans residues 27–49; that stretch reads CPSCSALMYYKEVIAQHHVCPKC.

The protein belongs to the AccD/PCCB family. In terms of assembly, acetyl-CoA carboxylase is a heterohexamer composed of biotin carboxyl carrier protein (AccB), biotin carboxylase (AccC) and two subunits each of ACCase subunit alpha (AccA) and ACCase subunit beta (AccD). Zn(2+) serves as cofactor.

Its subcellular location is the cytoplasm. It catalyses the reaction N(6)-carboxybiotinyl-L-lysyl-[protein] + acetyl-CoA = N(6)-biotinyl-L-lysyl-[protein] + malonyl-CoA. It participates in lipid metabolism; malonyl-CoA biosynthesis; malonyl-CoA from acetyl-CoA: step 1/1. Functionally, component of the acetyl coenzyme A carboxylase (ACC) complex. Biotin carboxylase (BC) catalyzes the carboxylation of biotin on its carrier protein (BCCP) and then the CO(2) group is transferred by the transcarboxylase to acetyl-CoA to form malonyl-CoA. The protein is Acetyl-coenzyme A carboxylase carboxyl transferase subunit beta of Wolinella succinogenes (strain ATCC 29543 / DSM 1740 / CCUG 13145 / JCM 31913 / LMG 7466 / NCTC 11488 / FDC 602W) (Vibrio succinogenes).